A 588-amino-acid chain; its full sequence is Aspartate--tRNA ligase (588 aa).

Glu-174 contributes to the L-aspartate binding site. Positions 198–201 (QLFK) are aspartate. Arg-220 contacts L-aspartate. ATP-binding positions include 220–222 (RDE) and Gln-229. His-448 provides a ligand contact to L-aspartate. ATP is bound at residue Glu-482. Arg-489 lines the L-aspartate pocket. Residue 534–537 (GIDR) coordinates ATP.

It belongs to the class-II aminoacyl-tRNA synthetase family. Type 1 subfamily. In terms of assembly, homodimer.

It is found in the cytoplasm. The enzyme catalyses tRNA(Asp) + L-aspartate + ATP = L-aspartyl-tRNA(Asp) + AMP + diphosphate. In terms of biological role, catalyzes the attachment of L-aspartate to tRNA(Asp) in a two-step reaction: L-aspartate is first activated by ATP to form Asp-AMP and then transferred to the acceptor end of tRNA(Asp). This is Aspartate--tRNA ligase from Xanthomonas campestris pv. campestris (strain 8004).